The chain runs to 754 residues: Leucine-rich repeat-containing protein 36 (754 aa).

LRR repeat units follow at residues Asn-51–Cys-72 and Ser-73–Gln-94. The region spanning Asn-107–His-146 is the LRRCT domain. The segment covering Arg-241–His-255 has biased composition (basic and acidic residues). A disordered region spans residues Arg-241–Thr-270. A coiled-coil region spans residues Asn-600–Ser-680. Residues Tyr-702–Ala-734 are disordered. Residues Phe-722–Pro-732 show a composition bias toward polar residues.

The sequence is that of Leucine-rich repeat-containing protein 36 (LRRC36) from Homo sapiens (Human).